A 193-amino-acid polypeptide reads, in one-letter code: Ion-translocating oxidoreductase complex subunit A (193 aa).

6 helical membrane passes run 5-25, 47-67, 72-92, 102-122, 134-154, and 171-191; these read LLLF…FLGL, FVMT…LIPL, LRTL…EMVV, LLGI…VALL, ALYG…FAAI, and AIAL…SGLV.

The protein belongs to the NqrDE/RnfAE family. In terms of assembly, the complex is composed of six subunits: RsxA, RsxB, RsxC, RsxD, RsxE and RsxG.

Its subcellular location is the cell inner membrane. Part of a membrane-bound complex that couples electron transfer with translocation of ions across the membrane. Required to maintain the reduced state of SoxR. This Salmonella arizonae (strain ATCC BAA-731 / CDC346-86 / RSK2980) protein is Ion-translocating oxidoreductase complex subunit A.